The following is a 259-amino-acid chain: Gasdermin bGSDM (259 aa).

C3 carries the S-palmitoyl cysteine lipid modification. 4 beta stranded membrane-spanning segments follow: residues 70 to 86, 98 to 116, 162 to 179, and 187 to 203; these read FQFRASSILQVGVAASV, SGSFSSAFSSSNADTIQLS, GIRISVADKSKKQVDLSA, and AKAKMELKREDTGSYAF. The segment at 244–259 is C-terminal region; that stretch reads PFAFIGDDAFVDLPES.

Belongs to the bacterial gasdermin family. Monomer in solution. In terms of assembly, forms large, homooligomeric ring-shaped pores when inserted in membranes. Post-translationally, palmitoylation helps stabilize the inactive state; may self palmitoylate. Palmitoylation plays a significant role in pore formation.

It localises to the cytoplasm. Its subcellular location is the cell inner membrane. Its activity is regulated as follows. The full-length protein before cleavage is inactive: intramolecular interactions between the N-terminal domain and the C-terminal region as well as the lipid modification, mediate autoinhibition. The pyroptosis-like-inducing activity is carried by the released N-terminal domain (Gasdermin bGSDM, N-terminus). Functionally, precursor of a pore-forming protein involved in defense against bacteriophages. Expression of bGSDM and the neighboring protease gene (Ga0098714_109514) is toxic in E.coli on solid medium. Cleavage of this precursor by its dedicated protease releases the active moiety (gasdermin bGSDM, N-terminus) which inserts into membranes, forming pores and triggering cell death. Its function is as follows. Pore-forming protein that causes membrane permeabilization via a pyroptosis-like activity. Makes ring-like pores when released. This chain is Gasdermin bGSDM, found in Bradyrhizobium tropiciagri.